A 1502-amino-acid chain; its full sequence is Clustered mitochondria protein homolog (1502 aa).

Disordered regions lie at residues Met-1 to Asp-62, Ala-571 to Met-615, Ala-755 to Arg-799, Lys-1054 to Val-1085, Ala-1381 to Gly-1403, and Gly-1429 to Arg-1502. Over residues Ala-7–Leu-35 the composition is skewed to low complexity. Basic and acidic residues predominate over residues Lys-53 to Asp-62. Positions Glu-399–Leu-693 constitute a Clu domain. The segment covering Thr-575–Glu-586 has biased composition (acidic residues). Residues Gly-587–Ser-606 are compositionally biased toward basic and acidic residues. Low complexity predominate over residues Glu-781–Ala-792. A compositionally biased stretch (basic and acidic residues) spans Lys-1054 to Ser-1069. The segment covering Gly-1429 to Gly-1451 has biased composition (low complexity). Residues Arg-1462–Val-1471 show a composition bias toward basic and acidic residues. Over residues Lys-1486 to Arg-1502 the composition is skewed to basic residues.

It belongs to the CLU family. As to quaternary structure, may associate with the eukaryotic translation initiation factor 3 (eIF-3) complex.

It localises to the cytoplasm. Its function is as follows. mRNA-binding protein involved in proper cytoplasmic distribution of mitochondria. This is Clustered mitochondria protein homolog from Cryptococcus neoformans var. neoformans serotype D (strain B-3501A) (Filobasidiella neoformans).